A 186-amino-acid polypeptide reads, in one-letter code: Small ribosomal subunit protein uS5 (186 aa).

An S5 DRBM domain is found at 20 to 83; sequence FVDKLVHINR…EAAKRDMIFV (64 aa).

This sequence belongs to the universal ribosomal protein uS5 family. Part of the 30S ribosomal subunit. Contacts proteins S4 and S8.

In terms of biological role, with S4 and S12 plays an important role in translational accuracy. Its function is as follows. Located at the back of the 30S subunit body where it stabilizes the conformation of the head with respect to the body. This Brucella ovis (strain ATCC 25840 / 63/290 / NCTC 10512) protein is Small ribosomal subunit protein uS5.